An 863-amino-acid polypeptide reads, in one-letter code: Leucine--tRNA ligase (863 aa).

The short motif at 42-53 (PYPSGSGLHVGH) is the 'HIGH' region element. Residues 635-639 (KMSKS) carry the 'KMSKS' region motif. Lysine 638 is an ATP binding site.

The protein belongs to the class-I aminoacyl-tRNA synthetase family.

Its subcellular location is the cytoplasm. It carries out the reaction tRNA(Leu) + L-leucine + ATP = L-leucyl-tRNA(Leu) + AMP + diphosphate. This is Leucine--tRNA ligase from Salinibacter ruber (strain DSM 13855 / M31).